A 379-amino-acid polypeptide reads, in one-letter code: Serine/threonine-protein kinase spe-6 (379 aa).

Positions 26–302 constitute a Protein kinase domain; it reads WKVLRNIYSG…SQAATEHQVT (277 aa). Residues 32–40 and Lys55 each bind ATP; that span reads IYSGPFSDV. The active-site Proton acceptor is the Asp147. Residues 331-379 are disordered; the sequence is ASAKLDAKDNANESMDIEFDDMPPKEGISKSLSAEKSCTKNVETARTEK. Polar residues predominate over residues 360 to 372; that stretch reads KSLSAEKSCTKNV.

It belongs to the protein kinase superfamily. CK1 Ser/Thr protein kinase family.

It carries out the reaction L-seryl-[protein] + ATP = O-phospho-L-seryl-[protein] + ADP + H(+). It catalyses the reaction L-threonyl-[protein] + ATP = O-phospho-L-threonyl-[protein] + ADP + H(+). Serine/threonine-protein kinase which is involved in spermatogenesis. In spermatocytes, regulates meiosis and the localization and assembly of major sperm protein (MSP) into fibrous bodies. In addition, may suppress the initiation of spermiogenesis downstream of spe-8, spe-12, spe-27 and spe-29. This is Serine/threonine-protein kinase spe-6 from Caenorhabditis elegans.